We begin with the raw amino-acid sequence, 292 residues long: MTLQHTRRIVKSLFILFIIVVCIYLLPRVAINAFYYPDNKVYGPTPAEAESITFTAKDGTHLHGWFIPTAFGRPENAVATVIHVHGNAGNMSAHWPLVSWLPERNVNLFMFDYRGFGESEGTPSQEGLLDDTKSAIDYVRHRADVNPERLVLLGQSLGGNNVLAAVGHCVGCANMRYADQAGIRAIILDSTFLSYSSIANQMIPGSGYLLDDRYSADRNIASVSPIPVLILHGTADHVIPWQDSEKLYALAREPKQKIFIPDGDHIDAFSGRYANLYRDAMIKFIQTALSAK.

The chain crosses the membrane as a helical span at residues 13-35 (LFILFIIVVCIYLLPRVAINAFY).

Belongs to the serine esterase family.

The protein resides in the membrane. This is an uncharacterized protein from Salmonella typhimurium (strain LT2 / SGSC1412 / ATCC 700720).